The chain runs to 363 residues: Probable aminomethyltransferase (363 aa).

It belongs to the GcvT family. The glycine cleavage system is composed of four proteins: P, T, L and H.

It catalyses the reaction N(6)-[(R)-S(8)-aminomethyldihydrolipoyl]-L-lysyl-[protein] + (6S)-5,6,7,8-tetrahydrofolate = N(6)-[(R)-dihydrolipoyl]-L-lysyl-[protein] + (6R)-5,10-methylene-5,6,7,8-tetrahydrofolate + NH4(+). Functionally, the glycine cleavage system catalyzes the degradation of glycine. The protein is Probable aminomethyltransferase of Haloarcula marismortui (strain ATCC 43049 / DSM 3752 / JCM 8966 / VKM B-1809) (Halobacterium marismortui).